Reading from the N-terminus, the 248-residue chain is Ubiquinone biosynthesis O-methyltransferase (248 aa).

S-adenosyl-L-methionine contacts are provided by arginine 41, glycine 72, aspartate 93, and methionine 136.

Belongs to the methyltransferase superfamily. UbiG/COQ3 family.

The enzyme catalyses a 3-demethylubiquinol + S-adenosyl-L-methionine = a ubiquinol + S-adenosyl-L-homocysteine + H(+). It catalyses the reaction a 3-(all-trans-polyprenyl)benzene-1,2-diol + S-adenosyl-L-methionine = a 2-methoxy-6-(all-trans-polyprenyl)phenol + S-adenosyl-L-homocysteine + H(+). It functions in the pathway cofactor biosynthesis; ubiquinone biosynthesis. O-methyltransferase that catalyzes the 2 O-methylation steps in the ubiquinone biosynthetic pathway. The polypeptide is Ubiquinone biosynthesis O-methyltransferase (Brucella melitensis biotype 2 (strain ATCC 23457)).